Reading from the N-terminus, the 170-residue chain is Vimentin A1 (170 aa).

Polar residues predominate over residues 1–10; that stretch reads DLTEAANKSN. The segment at 1–20 is disordered; that stretch reads DLTEAANKSNEALRLAKQES. Positions 1-111 are coil 2; sequence DLTEAANKSN…ATYRKLLEGE (111 aa). Residues 1-115 form the IF rod domain; it reads DLTEAANKSN…KLLEGEESRI (115 aa). Residues 112-170 are tail; the sequence is ESRISTPLPNFSSFNLRETMLELKPNIESTFTKKVLIKTIETRDGQVLNESTQNHDDLE.

It belongs to the intermediate filament family. Homomer. In terms of processing, one of the most prominent phosphoproteins in various cells of mesenchymal origin. Phosphorylation is enhanced during cell division, at which time vimentin filaments are significantly reorganized. In terms of tissue distribution, expressed in low amounts in retina, optic nerve, and brain and in higher amounts in spinal cord.

Vimentins are class-III intermediate filaments found in various non-epithelial cells, especially mesenchymal cells. Vimentin is attached to the nucleus, endoplasmic reticulum, and mitochondria, either laterally or terminally. This is Vimentin A1 from Carassius auratus (Goldfish).